The chain runs to 912 residues: Putative respiratory burst oxidase homolog protein J (912 aa).

Disordered regions lie at residues 1–51 (MKNN…GGGI) and 73–112 (WRKS…RTTS). Residues 1-323 (MKNNKKVGTE…VVVTAELMYE (323 aa)) lie on the Cytoplasmic side of the membrane. 2 stretches are compositionally biased toward polar residues: residues 29-44 (SVKQ…NPES) and 78-87 (NLGSPSTRKS). EF-hand-like regions lie at residues 147-155 (AVDGRLPKD) and 181-193 (RQIK…DKEQ). One can recognise an EF-hand domain in the interval 205–240 (DLDCRLQIFFDMCDKDGDGKLTEEEVKEVIVLSASA). 5 residues coordinate Ca(2+): D218, D220, D222, K224, and E229. Phosphoserine is present on S294. A helical membrane pass occupies residues 324–344 (HWKKIWVVTLWLAVNVVLFMW). Residues 345-363 (KYEEFTTSPLYNITGRCLC) lie on the Extracellular side of the membrane. A helical transmembrane segment spans residues 364–384 (AAKGTAEILKLNMALILVPVL). Residues 366-523 (KGTAEILKLN…LLVIAYALLI (158 aa)) enclose the Ferric oxidoreductase domain. Topologically, residues 385-410 (RRTLTFLRSTFLNHLIPFDDNINFHK) are cytoplasmic. Residues 411–431 (LIAVAIAVISLLHTALHMLCN) form a helical membrane-spanning segment. Over 432–458 (YPRLSSCPYNFYSDYAGNLLGAKQPTY) the chain is Extracellular. Residues 459–479 (LGLMLTPVSVTGVLMIIFMGI) traverse the membrane as a helical segment. The Cytoplasmic portion of the chain corresponds to 480–510 (SFTLAMHYFRRNIVKLPIPFNRLAGFNSFWY). A helical transmembrane segment spans residues 511–531 (AHHLLVIAYALLIIHGYILII). Over 532-697 (EKPWYQKTTW…PYGAPAQSYQ (166 aa)) the chain is Extracellular. An FAD-binding FR-type domain is found at 562–695 (EHNHRVHIIK…KGPYGAPAQS (134 aa)). Residues 698–718 (KFDILLLIGLGIGATPFISIL) form a helical membrane-spanning segment. At 719–912 (KDMLNNLKPG…TRFTFHKENF (194 aa)) the chain is on the cytoplasmic side.

The protein belongs to the RBOH (TC 5.B.1.3) family. In terms of assembly, monomer and homodimer.

The protein resides in the membrane. In terms of biological role, calcium-dependent NADPH oxidase that generates superoxide. This chain is Putative respiratory burst oxidase homolog protein J (RBOHJ), found in Arabidopsis thaliana (Mouse-ear cress).